A 562-amino-acid polypeptide reads, in one-letter code: Glucocorticoid modulatory element-binding protein 1 (562 aa).

Ala2 carries the post-translational modification N-acetylalanine. In terms of domain architecture, SAND spans Ala72–Asp156. Cys103 contributes to the Zn(2+) binding site. Positions 129, 133, 136, and 147 each coordinate DNA. Residues His160, Cys164, and Cys168 each coordinate Zn(2+). A coiled-coil region spans residues Leu311–Asn355. Residues Pro360–Ser384 are disordered. Residues Pro375 to Ser384 show a composition bias toward polar residues.

Homodimer, and heterodimer of GMEB1 and GMEB2. Interacts with TRIM63. Interacts with the glucocorticoid receptor (NR3C1) and NCOA2/TIF2. May interact with HSP27 and CREB-binding protein (CBP). As to expression, ubiquitous. Low levels were detected in heart, brain, spleen, lung, liver, skeletal muscle, kidney and testis.

The protein resides in the nucleus. Its subcellular location is the cytoplasm. Trans-acting factor that binds to glucocorticoid modulatory elements (GME) present in the TAT (tyrosine aminotransferase) promoter and increases sensitivity to low concentrations of glucocorticoids. Also binds to the transferrin receptor promoter. The polypeptide is Glucocorticoid modulatory element-binding protein 1 (Gmeb1) (Mus musculus (Mouse)).